Reading from the N-terminus, the 130-residue chain is Inner membrane protein YqjF (130 aa).

Over 1–5 the chain is Cytoplasmic; that stretch reads MKKLE. A helical membrane pass occupies residues 6–26; it reads DVGVLVARILMPILFITAGWG. Residues 27 to 45 lie on the Periplasmic side of the membrane; it reads KITGYAGTQQYMEAMGVPG. A helical membrane pass occupies residues 46–66; that stretch reads FMLPLVILLEFGGGLAILFGF. At 67-70 the chain is on the cytoplasmic side; it reads LTRT. The helical transmembrane segment at 71 to 91 threads the bilayer; the sequence is TALFTAGFTLLTAFLFHSNFA. Residues 92–101 are Periplasmic-facing; it reads EGVNSLMFMK. Residues 102-122 traverse the membrane as a helical segment; that stretch reads NLTISGGFLLLAITGPGAYSI. Residues 123–130 are Cytoplasmic-facing; sequence DRLLNKKW.

It belongs to the DoxX family.

It is found in the cell inner membrane. The protein is Inner membrane protein YqjF (yqjF) of Escherichia coli (strain K12).